A 194-amino-acid polypeptide reads, in one-letter code: Crossover junction endodeoxyribonuclease RuvC (194 aa).

Active-site residues include Asp-8, Glu-72, and Asp-144. Mg(2+) contacts are provided by Asp-8, Glu-72, and Asp-144.

The protein belongs to the RuvC family. Homodimer which binds Holliday junction (HJ) DNA. The HJ becomes 2-fold symmetrical on binding to RuvC with unstacked arms; it has a different conformation from HJ DNA in complex with RuvA. In the full resolvosome a probable DNA-RuvA(4)-RuvB(12)-RuvC(2) complex forms which resolves the HJ. Mg(2+) is required as a cofactor.

It is found in the cytoplasm. It carries out the reaction Endonucleolytic cleavage at a junction such as a reciprocal single-stranded crossover between two homologous DNA duplexes (Holliday junction).. Its function is as follows. The RuvA-RuvB-RuvC complex processes Holliday junction (HJ) DNA during genetic recombination and DNA repair. Endonuclease that resolves HJ intermediates. Cleaves cruciform DNA by making single-stranded nicks across the HJ at symmetrical positions within the homologous arms, yielding a 5'-phosphate and a 3'-hydroxyl group; requires a central core of homology in the junction. The consensus cleavage sequence is 5'-(A/T)TT(C/G)-3'. Cleavage occurs on the 3'-side of the TT dinucleotide at the point of strand exchange. HJ branch migration catalyzed by RuvA-RuvB allows RuvC to scan DNA until it finds its consensus sequence, where it cleaves and resolves the cruciform DNA. The sequence is that of Crossover junction endodeoxyribonuclease RuvC from Psychrobacter arcticus (strain DSM 17307 / VKM B-2377 / 273-4).